Consider the following 335-residue polypeptide: Mesoderm-specific transcript homolog protein (335 aa).

The next 2 helical transmembrane spans lie at 13–33 and 63–83; these read WWVQVGLLAVPLLAAYLHIPP and VGVVGSPEIVVLLHGFPTSSY. The 240-residue stretch at 71-310 folds into the AB hydrolase-1 domain; it reads IVVLLHGFPT…PRSTVSILDD (240 aa). The RVIALD signature appears at 98 to 103; it reads RVIALD. Asn-163 carries an N-linked (GlcNAc...) asparagine glycan. A helical membrane pass occupies residues 266–286; sequence VGALASVTIPIHFIYGPLDPV.

This sequence belongs to the AB hydrolase superfamily. As to expression, highly expressed in hydatidiform moles, but barely expressed in dermoid cysts. Biallelic expression is detected in blood lymphocytes. Seems to imprinted in an isoform-specific manner rather than in a tissue-specific manner in lymphocytes. Isoform 1 is expressed only from the paternal allele. Isoform 2 is expressed from both the paternal allele and the maternal allele.

It localises to the endoplasmic reticulum membrane. In Homo sapiens (Human), this protein is Mesoderm-specific transcript homolog protein (MEST).